The following is a 210-amino-acid chain: MTKGILGRKIGMTQVFAENGELIPVTVIAANPNVVLQKKTTETDGYNAIQLGFEDKREKLTNKPEQGHTAKASTTPKRFIREIRDADVDGLEVGQEVKVDVFATGEIVDVTGISKGKGFQGVIKRHGQSRGPMSHGSRYHRRPGSMGPVAPNRVFKGKKLAGRMGGDQVTIQNLEIVQVDTERNLLLVKGNVPGAKKSLVVVQGAVKVSK.

Residues 125-151 (RHGQSRGPMSHGSRYHRRPGSMGPVAP) form a disordered region.

The protein belongs to the universal ribosomal protein uL3 family. As to quaternary structure, part of the 50S ribosomal subunit. Forms a cluster with proteins L14 and L19.

In terms of biological role, one of the primary rRNA binding proteins, it binds directly near the 3'-end of the 23S rRNA, where it nucleates assembly of the 50S subunit. This Bacillus cereus (strain Q1) protein is Large ribosomal subunit protein uL3.